The sequence spans 242 residues: Segregation and condensation protein A (242 aa).

It belongs to the ScpA family. Component of a cohesin-like complex composed of ScpA, ScpB and the Smc homodimer, in which ScpA and ScpB bind to the head domain of Smc. The presence of the three proteins is required for the association of the complex with DNA.

Its subcellular location is the cytoplasm. Participates in chromosomal partition during cell division. May act via the formation of a condensin-like complex containing Smc and ScpB that pull DNA away from mid-cell into both cell halves. The chain is Segregation and condensation protein A from Lactococcus lactis subsp. cremoris (strain SK11).